The following is a 121-amino-acid chain: Small ribosomal subunit protein uS13 (121 aa).

The segment at 97 to 121 (VRGQRTRTNARTRRGARKTVAGKKK) is disordered. Residues 100–121 (QRTRTNARTRRGARKTVAGKKK) show a composition bias toward basic residues.

It belongs to the universal ribosomal protein uS13 family. As to quaternary structure, part of the 30S ribosomal subunit. Forms a loose heterodimer with protein S19. Forms two bridges to the 50S subunit in the 70S ribosome.

Its function is as follows. Located at the top of the head of the 30S subunit, it contacts several helices of the 16S rRNA. In the 70S ribosome it contacts the 23S rRNA (bridge B1a) and protein L5 of the 50S subunit (bridge B1b), connecting the 2 subunits; these bridges are implicated in subunit movement. Contacts the tRNAs in the A and P-sites. The protein is Small ribosomal subunit protein uS13 of Prochlorococcus marinus (strain MIT 9303).